A 143-amino-acid polypeptide reads, in one-letter code: Nuclear transcription factor Y subunit B-4 (143 aa).

The segment at 1–23 is disordered; that stretch reads MSEGFDGTENGGGGGGGGVGKEQ. Gly residues predominate over residues 9 to 20; it reads ENGGGGGGGGVG. A DNA-binding region spans residues 27–33; sequence LPIANIG. The segment at 54–65 is subunit association domain (SAD); it reads VQECVSEFISFI. Positions 117–130 are enriched in basic and acidic residues; it reads KGSRASELPVKKDV. A disordered region spans residues 117 to 143; it reads KGSRASELPVKKDVVLNGDPGSSFEGM.

Belongs to the NFYB/HAP3 subunit family. In terms of assembly, heterotrimeric transcription factor composed of three components, NF-YA, NF-YB and NF-YC. NF-YB and NF-YC must interact and dimerize for NF-YA association and DNA binding. As to expression, ubiquitous.

The protein resides in the nucleus. Its function is as follows. Component of the NF-Y/HAP transcription factor complex. The NF-Y complex stimulates the transcription of various genes by recognizing and binding to a CCAAT motif in promoters. May regulate the expression of photosynthetic genes, and may be involved in chloroplast and amyloplast development. The chain is Nuclear transcription factor Y subunit B-4 (NFYB4) from Oryza sativa subsp. japonica (Rice).